We begin with the raw amino-acid sequence, 242 residues long: MSGFFITATDTEVGKTVVAGALAGVFRELGYNIGVYKALQSGHVASNPEGDAARLKVLSGVPTKEDEICPYSIEEPLAPRLAMKRAGRAVTLKDIIHHYNERLKEFNSLFVEGAGGLAVPYTEDALVIDFAKELQLPLIVVARPTLGTVNHTVLTIAYAKANGLTVAGVILSGCKECEMERVQENKVMIEELSGVPVLGLLPFFEGEFTKEEVLESAKEYIMISKLEEFIRNESTVAHTSSN.

Residue 12-17 (EVGKTV) coordinates ATP. Thr16 is a binding site for Mg(2+). Lys37 is a catalytic residue. Substrate is bound at residue Ser41. Residues Asp51 and 112-115 (EGAG) each bind ATP. Mg(2+)-binding residues include Asp51 and Glu112.

This sequence belongs to the dethiobiotin synthetase family. In terms of assembly, homodimer. It depends on Mg(2+) as a cofactor.

The protein localises to the cytoplasm. The enzyme catalyses (7R,8S)-7,8-diammoniononanoate + CO2 + ATP = (4R,5S)-dethiobiotin + ADP + phosphate + 3 H(+). Its pathway is cofactor biosynthesis; biotin biosynthesis; biotin from 7,8-diaminononanoate: step 1/2. Catalyzes a mechanistically unusual reaction, the ATP-dependent insertion of CO2 between the N7 and N8 nitrogen atoms of 7,8-diaminopelargonic acid (DAPA, also called 7,8-diammoniononanoate) to form a ureido ring. This is ATP-dependent dethiobiotin synthetase BioD from Bacillus thuringiensis subsp. konkukian (strain 97-27).